The chain runs to 331 residues: FMRFamide-related neuropeptides (331 aa).

Positions 1–25 (MRCWSPCSLLVVIVIYCLSSHTSEA) are cleaved as a signal peptide. Positions 26 to 65 (FDLAQACVESQRLSLLPICDTIFAVQQEGAQQSADDGMRS) are excised as a propeptide. A phenylalanine amide mark is found at F71 and F83. Residues 86 to 94 (NVPDLPFED) constitute a propeptide that is removed on maturation. F100 is subject to Phenylalanine amide. A propeptide spanning residues 103 to 168 (AAPQLDDLLK…YIDDVEDSDV (66 aa)) is cleaved from the precursor. Residues 122–158 (QKADETSVRRKRSTDAAPQNNAENPEQKNDSAKITKR) form a disordered region. Basic and acidic residues predominate over residues 146–158 (PEQKNDSAKITKR). 2 positions are modified to phenylalanine amide: F174 and F181. A propeptide spanning residues 184-194 (NPSDAGNKLTE) is cleaved from the precursor. F200 is modified (phenylalanine amide). The propeptide occupies 203–205 (DPE). The residue at position 211 (F211) is a Phenylalanine amide. The propeptide occupies 214–216 (SDD). F222 carries the post-translational modification Phenylalanine amide. The propeptide occupies 225 to 236 (NPSDVEDELEED). F242 bears the Phenylalanine amide mark. Positions 245–254 (GGEDDEEEAE) are excised as a propeptide. A Phenylalanine amide modification is found at F260. Positions 263–265 (DPE) are excised as a propeptide. At F271 the chain carries Phenylalanine amide. Residues 274–277 (SGED) constitute a propeptide that is removed on maturation. A compositionally biased stretch (basic and acidic residues) spans 282–296 (RFGRNPDEQEADKRF). The interval 282–310 (RFGRNPDEQEADKRFMRFGRGGEDDEVST) is disordered. F283 is modified (phenylalanine amide). The propeptide occupies 286 to 293 (NPDEQEAD). F299 is subject to Phenylalanine amide. Positions 302 to 312 (GGEDDEVSTED) are excised as a propeptide. A Phenylalanine amide modification is found at F318. A propeptide spanning residues 321–331 (SADKCKGCLEG) is cleaved from the precursor.

It belongs to the FARP (FMRFamide related peptide) family.

The protein localises to the secreted. Its function is as follows. Excitatory neurotransmitters that directly modulate chromatophore function by activating chromatophore expansion at the chromatophore neuromuscular junction. The polypeptide is FMRFamide-related neuropeptides (Doryteuthis pealeii (Longfin inshore squid)).